We begin with the raw amino-acid sequence, 448 residues long: Alpha-2B adrenergic receptor (448 aa).

The Extracellular segment spans residues 1–12 (MDHQEPYSVQAT). The helical transmembrane segment at 13–38 (AAIAAVITFLILFTIFGNALVILAVL) threads the bilayer. Over 39–49 (TSRSLPAPQNL) the chain is Cytoplasmic. A helical transmembrane segment spans residues 50-75 (FLVSLAAADILVATLIIPFSLANELL). Topologically, residues 76–85 (GYWYFWRTWC) are extracellular. A disulfide bridge links Cys85 with Cys163. The helical transmembrane segment at 86–108 (EVYLALDVLFCTSSIVHLCAISL) threads the bilayer. Residues 109–130 (DRYWAVSRALEYNSKRTPRRIK) lie on the Cytoplasmic side of the membrane. The helical transmembrane segment at 131–153 (CIILTVWLIAAVISLPPLIYKGD) threads the bilayer. Residues 154–168 (QGPSPRGPQCKINQE) are Extracellular-facing. A helical transmembrane segment spans residues 169–192 (AWYILASSIGSFFAPCLIMILVYL). Residues 193–370 (RIYLIAKRSH…MTREKRFTFV (178 aa)) lie on the Cytoplasmic side of the membrane. Residues 203–326 (RRGPRAKGGP…PASMCSPSLQ (124 aa)) are disordered. The span at 293-309 (AEEEAEEEEEEEGDECE) shows a compositional bias: acidic residues. A helical membrane pass occupies residues 371 to 394 (LAVVIGVFVLCWFPFFFTYSLGAI). At 395-403 (CPQHCKVPH) the chain is on the extracellular side. The helical transmembrane segment at 404 to 427 (GLFQFFFWIGYCNSSLNPVIYTIF) threads the bilayer. Residues 428–448 (NQDFRRAFRRILCRQWTQTAW) lie on the Cytoplasmic side of the membrane. A lipid anchor (S-palmitoyl cysteine) is attached at Cys440.

Belongs to the G-protein coupled receptor 1 family. Adrenergic receptor subfamily. ADRA2B sub-subfamily. Interacts with RAB26. Interacts with PPP1R9B.

It is found in the cell membrane. Alpha-2 adrenergic receptors mediate the catecholamine-induced inhibition of adenylate cyclase through the action of G proteins. The protein is Alpha-2B adrenergic receptor (ADRA2B) of Cavia porcellus (Guinea pig).